Reading from the N-terminus, the 88-residue chain is U-scoloptoxin(XY)-Er1b (88 aa).

Residues methionine 1 to serine 24 form the signal peptide. The interval arginine 66–alanine 88 is disordered. Residues glutamate 79–alanine 88 constitute a propeptide that is removed on maturation.

The protein belongs to the scoloptoxin-XY family. Post-translationally, contains 3 disulfide bonds. In terms of tissue distribution, expressed by the venom gland.

Its subcellular location is the secreted. The protein is U-scoloptoxin(XY)-Er1b of Ethmostigmus rubripes (Giant centipede).